The chain runs to 250 residues: Protein KPLCE (250 aa).

In terms of tissue distribution, skin-specific.

The polypeptide is Protein KPLCE (Homo sapiens (Human)).